The sequence spans 265 residues: Translation initiation factor 2 subunit alpha (265 aa).

Positions 12-83 constitute an S1 motif domain; the sequence is GELIIGTVYK…KKGHVDASLK (72 aa).

The protein belongs to the eIF-2-alpha family. In terms of assembly, heterotrimer composed of an alpha, a beta and a gamma chain.

Functionally, eIF-2 functions in the early steps of protein synthesis by forming a ternary complex with GTP and initiator tRNA. The chain is Translation initiation factor 2 subunit alpha from Methanobrevibacter smithii (strain ATCC 35061 / DSM 861 / OCM 144 / PS).